The following is a 663-amino-acid chain: Polyunsaturated fatty acid lipoxygenase ALOX15 (663 aa).

Positions 2 to 115 (GVYRIRVSTG…ILSLPEGTGC (114 aa)) constitute a PLAT domain. In terms of domain architecture, Lipoxygenase spans 116 to 663 (TVVEDSQGLF…PSMVENSVAI (548 aa)). Ser-149 carries the post-translational modification Phosphoserine. Fe cation is bound by residues His-361, His-366, His-541, His-545, and Ile-663.

This sequence belongs to the lipoxygenase family. In terms of assembly, interacts with PEBP1; in response to IL13/interleukin-13, prevents the interaction of PEBP1 with RAF1 to activate the ERK signaling cascade. Requires Fe cation as cofactor. In terms of tissue distribution, detected in leukocytes, lung and aorta.

Its subcellular location is the cytoplasm. The protein localises to the cytosol. It is found in the cell membrane. It localises to the lipid droplet. It carries out the reaction (5Z,8Z,11Z,14Z)-eicosatetraenoate + O2 = (12S)-hydroperoxy-(5Z,8Z,10E,14Z)-eicosatetraenoate. It catalyses the reaction (5Z,8Z,11Z,14Z)-eicosatetraenoate + O2 = (15S)-hydroperoxy-(5Z,8Z,11Z,13E)-eicosatetraenoate. The catalysed reaction is (9Z,12Z)-octadecadienoate + O2 = (13S)-hydroperoxy-(9Z,11E)-octadecadienoate. The enzyme catalyses (12S)-hydroperoxy-(5Z,8Z,10E,14Z)-eicosatetraenoate = (8S)-hydroxy-(11S,12S)-epoxy-(5Z,9E,14Z)-eicosatrienoate. It carries out the reaction (5Z,8Z,11Z,14Z)-eicosatetraenoate + 2 O2 = (14R,15S)-dihydroperoxy-(5Z,8Z,10E,12E)-eicosatetraenoate. It catalyses the reaction (5Z,8Z,11Z,14Z)-eicosatetraenoate + 2 O2 = (8S,15S)-dihydroperoxy-(5Z,9E,11Z,13E)-eicosatetraenoate. The catalysed reaction is (14S,15R)-epoxy-(5Z,8Z,11Z)-eicosatrienoate + O2 = (8S)-hydroperoxy-(14S,15R)-epoxy-(5Z,9E,11Z)-eicosatrienoate. The enzyme catalyses (14S,15R)-epoxy-(5Z,8Z,11Z)-eicosatrienoate + O2 = (12S)-hydroperoxy-(14S,15R)-epoxy-(5Z,8Z,10E)-eicosatrienoate. It carries out the reaction (14R,15S)-epoxy-(5Z,8Z,11Z)-eicosatrienoate + O2 = (5S)-hydroperoxy-(14R,15S)-epoxy-(6E,8Z,11Z)-eicosatrienoate. It catalyses the reaction (14R,15S)-epoxy-(5Z,8Z,11Z)-eicosatrienoate + O2 = (12S)-hydroperoxy-(14R,15S)-epoxy-(5Z,8Z,10E)-eicosatrienoate. The catalysed reaction is (15R)-hydroperoxy-(5Z,8Z,11Z,13E)-eicosatetraenoate = 15-oxo-(5Z,8Z,11Z,13E)-eicosatetraenoate + H2O. The enzyme catalyses (15S)-hydroperoxy-(5Z,8Z,11Z,13E)-eicosatetraenoate = (14S,15S)-epoxy-(5Z,8Z,10E,12E)-eicosatetraenoate + H2O. It carries out the reaction (4Z,7Z,10Z,13Z,16Z)-docosapentaenoate + O2 = 14-hydroperoxy-(4Z,7Z,10Z,12E,16Z)-docosapentaenoate. It catalyses the reaction (7Z,10Z,13Z,16Z,19Z)-docosapentaenoate + O2 = 14-hydroperoxy-(7Z,10Z,12E,16Z,19Z)-docosapentaenoate. The catalysed reaction is (4Z,7Z,10Z,13Z,16Z,19Z)-docosahexaenoate + O2 = (14S)-hydroperoxy-(4Z,7Z,10Z,12E,16Z,19Z)-docosahexaenoate. The enzyme catalyses (4Z,7Z,10Z,13Z,16Z,19Z)-docosahexaenoate + O2 = (17S)-hydroperoxy-(4Z,7Z,10Z,13Z,15E,19Z)-docosahexaenoate. It carries out the reaction (7S)-hydroperoxy-(4Z,8E,10Z,13Z,16Z,19Z)-docosahexaenoate + O2 = (7S,14S)-dihydroperoxy-(4Z,8E,10Z,12E,16Z,19Z)-docosahexaenoate. It catalyses the reaction (7S)-hydroperoxy-(4Z,8E,10Z,13Z,16Z,19Z)-docosahexaenoate + O2 = (7S,17S)-dihydroperoxy-(4Z,8E,10Z,13Z,15E,19Z)-docosahexaenoate. The catalysed reaction is (4Z,7Z,10Z,13Z,16Z,19Z)-docosahexaenoate + O2 = (11S)-hydroperoxy-(4Z,7Z,9E,13Z,16Z,19Z)-docosahexaenoate. The enzyme catalyses N-(5Z,8Z,11Z,14Z)-eicosatetraenoyl-taurine + O2 = N-(12S)-hydroperoxy-(5Z,8Z,10E,14Z)-eicosatetraenoyl-taurine. It carries out the reaction N-(5Z,8Z,11Z,14Z)-eicosatetraenoyl-gamma-aminobutanoate + O2 = N-(12S)-hydroperoxy-(5Z,8Z,10E,14Z)-eicosatetraenoyl-gamma-aminobutanoate. It catalyses the reaction N-(5Z,8Z,11Z,14Z)-eicosatetraenoyl-glycine + O2 = N-(12S)-hydroperoxy-(5Z,8Z,10E,14Z)-eicosatetraenoyl-glycine. The catalysed reaction is N-(5Z,8Z,11Z,14Z)-eicosatetraenoyl-L-alanine + O2 = N-(12S)-hydroperoxy-(5Z,8Z,10E,14Z)-eicosatetraenoyl-alanine. The enzyme catalyses N-(5Z,8Z,11Z,14Z)-eicosatetraenoyl-taurine + O2 = N-(15S)-hydroperoxy-(5Z,8Z,11Z,13E)-eicosatetraenoyl-taurine. It carries out the reaction N-(5Z,8Z,11Z,14Z)-eicosatetraenoyl-gamma-aminobutanoate + O2 = N-(15S)-hydroperoxy-(5Z,8Z,11Z,13E)-eicosatetraenoyl-gamma-aminobutanoate. It catalyses the reaction N-(5Z,8Z,11Z,14Z)-eicosatetraenoyl-glycine + O2 = N-(15S)-hydroperoxy-(5Z,8Z,11Z,13E)-eicosatetraenoyl-glycine. The catalysed reaction is N-(5Z,8Z,11Z,14Z)-eicosatetraenoyl-L-alanine + O2 = N-(15S)-hydroperoxy-(5Z,8Z,11Z,13E)-eicosatetraenoyl-alanine. It participates in lipid metabolism; hydroperoxy eicosatetraenoic acid biosynthesis. Functionally, non-heme iron-containing dioxygenase that catalyzes the stereo-specific peroxidation of free and esterified polyunsaturated fatty acids generating a spectrum of bioactive lipid mediators. It inserts peroxyl groups at C12 or C15 of arachidonate ((5Z,8Z,11Z,14Z)-eicosatetraenoate) producing both 12-hydroperoxyeicosatetraenoate/12-HPETE and 15-hydroperoxyeicosatetraenoate/15-HPETE. It may then act on 12-HPETE to produce hepoxilins, which may show pro-inflammatory properties. Can also peroxidize linoleate ((9Z,12Z)-octadecadienoate) to 13-hydroperoxyoctadecadienoate. May participate in the sequential oxidations of DHA ((4Z,7Z,10Z,13Z,16Z,19Z)-docosahexaenoate) to generate specialized pro-resolving mediators (SPMs)like resolvin D5 ((7S,17S)-diHPDHA) and (7S,14S)-diHPDHA, that actively down-regulate the immune response and have anti-aggregation properties with platelets. Can convert epoxy fatty acids to hydroperoxy-epoxides derivatives followed by an intramolecular nucleophilic substitution leading to the formation of monocyclic endoperoxides. Plays an important role during the maintenance of self-tolerance by peroxidizing membrane-bound phosphatidylethanolamine which can then signal the sorting process for clearance of apoptotic cells during inflammation and prevent an autoimmune response. In addition to its role in the immune and inflammatory responses, this enzyme may play a role in epithelial wound healing in the cornea through production of lipoxin A4 (LXA(4)) and docosahexaenoic acid-derived neuroprotectin D1 (NPD1; 10R,17S-HDHA), both lipid autacoids exhibit anti-inflammatory and neuroprotective properties. Furthermore, it may regulate actin polymerization which is crucial for several biological processes such as the phagocytosis of apoptotic cells. It is also implicated in the generation of endogenous ligands for peroxisome proliferator activated receptor (PPAR-gamma), hence modulating macrophage development and function. It may also exert a negative effect on skeletal development by regulating bone mass through this pathway. As well as participates in ER stress and downstream inflammation in adipocytes, pancreatic islets, and liver. Finally, it is also involved in the cellular response to IL13/interleukin-13. This is Polyunsaturated fatty acid lipoxygenase ALOX15 from Rattus norvegicus (Rat).